Consider the following 646-residue polypeptide: Mitochondrial distribution and morphology protein 10 (646 aa).

Disordered stretches follow at residues 206-230 (KSTSSSMDRLDSSNPSLSSSTSLSN) and 315-347 (ETSSSASYPQRNGSVLHTGSSSSSEDTEAGGGL). Low complexity predominate over residues 207–230 (STSSSMDRLDSSNPSLSSSTSLSN). Positions 315-333 (ETSSSASYPQRNGSVLHTG) are enriched in polar residues.

It belongs to the MDM10 family. Component of the ER-mitochondria encounter structure (ERMES) or MDM complex, composed of MMM1, MDM10, MDM12 and MDM34. Associates with the mitochondrial outer membrane sorting assembly machinery SAM(core) complex.

Its subcellular location is the mitochondrion outer membrane. Its function is as follows. Component of the ERMES/MDM complex, which serves as a molecular tether to connect the endoplasmic reticulum and mitochondria. Components of this complex are involved in the control of mitochondrial shape and protein biogenesis and may function in phospholipid exchange. MDM10 is involved in the late assembly steps of the general translocase of the mitochondrial outer membrane (TOM complex). Functions in the TOM40-specific route of the assembly of outer membrane beta-barrel proteins, including the association of TOM40 with the receptor TOM22 and small TOM proteins. Can associate with the SAM(core) complex as well as the MDM12-MMM1 complex, both involved in late steps of the major beta-barrel assembly pathway, that is responsible for biogenesis of all outer membrane beta-barrel proteins. May act as a switch that shuttles between both complexes and channels precursor proteins into the TOM40-specific pathway. Plays a role in mitochondrial morphology and in the inheritance of mitochondria. The protein is Mitochondrial distribution and morphology protein 10 of Mycosarcoma maydis (Corn smut fungus).